Reading from the N-terminus, the 373-residue chain is 3 beta-hydroxysteroid dehydrogenase/Delta 5--&gt;4-isomerase type 4 (373 aa).

Tyr-155 (proton acceptor) is an active-site residue. Lys-159 serves as a coordination point for NAD(+). Residues 288-308 traverse the membrane as a helical segment; it reads LPLLYWLAFLLEIVSFFLHPV. At Lys-350 the chain carries N6-acetyllysine.

This sequence belongs to the 3-beta-HSD family. In terms of tissue distribution, skin, placenta, also detectable in ovary and adrenal gland.

It localises to the endoplasmic reticulum membrane. The protein resides in the mitochondrion membrane. It carries out the reaction a 3beta-hydroxy-Delta(5)-steroid + NAD(+) = a 3-oxo-Delta(5)-steroid + NADH + H(+). The catalysed reaction is a 3-oxo-Delta(5)-steroid = a 3-oxo-Delta(4)-steroid. The protein operates within lipid metabolism; steroid biosynthesis. In terms of biological role, 3-beta-HSD is a bifunctional enzyme, that catalyzes the oxidative conversion of Delta(5)-ene-3-beta-hydroxy steroid, and the oxidative conversion of ketosteroids. The 3-beta-HSD enzymatic system plays a crucial role in the biosynthesis of all classes of hormonal steroids. This Rattus norvegicus (Rat) protein is 3 beta-hydroxysteroid dehydrogenase/Delta 5--&gt;4-isomerase type 4 (Hsd3b6).